The chain runs to 98 residues: NADH-ubiquinone oxidoreductase chain 4L (98 aa).

3 helical membrane-spanning segments follow: residues 1–21 (MPLI…GMLV), 29–49 (SLLC…LMTL), and 58–78 (IMPI…LALL).

Belongs to the complex I subunit 4L family. Core subunit of respiratory chain NADH dehydrogenase (Complex I) which is composed of 45 different subunits.

It is found in the mitochondrion inner membrane. It catalyses the reaction a ubiquinone + NADH + 5 H(+)(in) = a ubiquinol + NAD(+) + 4 H(+)(out). Core subunit of the mitochondrial membrane respiratory chain NADH dehydrogenase (Complex I) which catalyzes electron transfer from NADH through the respiratory chain, using ubiquinone as an electron acceptor. Part of the enzyme membrane arm which is embedded in the lipid bilayer and involved in proton translocation. The chain is NADH-ubiquinone oxidoreductase chain 4L (MT-ND4L) from Pongo abelii (Sumatran orangutan).